The primary structure comprises 460 residues: Cysteine--tRNA ligase (460 aa).

Cysteine 29 lines the Zn(2+) pocket. The short motif at 31–41 (ATPQSSPHIGH) is the 'HIGH' region element. 3 residues coordinate Zn(2+): cysteine 212, histidine 237, and glutamate 241. Positions 268 to 272 (KMSKS) match the 'KMSKS' region motif. Residue lysine 271 coordinates ATP.

The protein belongs to the class-I aminoacyl-tRNA synthetase family. Monomer. It depends on Zn(2+) as a cofactor.

It localises to the cytoplasm. The catalysed reaction is tRNA(Cys) + L-cysteine + ATP = L-cysteinyl-tRNA(Cys) + AMP + diphosphate. In Corynebacterium glutamicum (strain R), this protein is Cysteine--tRNA ligase.